A 121-amino-acid polypeptide reads, in one-letter code: Spermidine export protein MdtJ (121 aa).

4 helical membrane-spanning segments follow: residues 1–21 (MYIY…GTLS), 32–52 (GGFI…SFAV), 55–75 (IALG…ITLF), and 82–102 (ESLS…IVLI).

This sequence belongs to the drug/metabolite transporter (DMT) superfamily. Small multidrug resistance (SMR) (TC 2.A.7.1) family. MdtJ subfamily. As to quaternary structure, forms a complex with MdtI.

The protein localises to the cell inner membrane. In terms of biological role, catalyzes the excretion of spermidine. The protein is Spermidine export protein MdtJ of Escherichia coli O127:H6 (strain E2348/69 / EPEC).